The following is a 131-amino-acid chain: Fumarate reductase subunit C (131 aa).

A run of 3 helical transmembrane segments spans residues E30–L50, F63–H83, and I109–L129.

Belongs to the FrdC family. Part of an enzyme complex containing four subunits: a flavoprotein (FrdA), an iron-sulfur protein (FrdB), and two hydrophobic anchor proteins (FrdC and FrdD).

It localises to the cell inner membrane. Its function is as follows. Two distinct, membrane-bound, FAD-containing enzymes are responsible for the catalysis of fumarate and succinate interconversion; fumarate reductase is used in anaerobic growth, and succinate dehydrogenase is used in aerobic growth. Anchors the catalytic components of the fumarate reductase complex to the cell inner membrane, binds quinones. The polypeptide is Fumarate reductase subunit C (Shigella boydii serotype 18 (strain CDC 3083-94 / BS512)).